A 129-amino-acid polypeptide reads, in one-letter code: UPF0148 protein AF_2370 (129 aa).

Residues 61 to 80 (SAAKAESEEKPPESTKPAVK) form a disordered region.

Belongs to the UPF0148 family.

The protein is UPF0148 protein AF_2370 of Archaeoglobus fulgidus (strain ATCC 49558 / DSM 4304 / JCM 9628 / NBRC 100126 / VC-16).